Reading from the N-terminus, the 48-residue chain is Large ribosomal subunit protein bL32 (48 aa).

Positions 1–20 (MAVPDRRVSKTRAAKRRTHY) are disordered. Over residues 9–20 (SKTRAAKRRTHY) the composition is skewed to basic residues.

It belongs to the bacterial ribosomal protein bL32 family.

This chain is Large ribosomal subunit protein bL32, found in Helicobacter acinonychis (strain Sheeba).